A 378-amino-acid chain; its full sequence is UPF0754 membrane protein BT9727_0767 (378 aa).

Transmembrane regions (helical) follow at residues 1-21 (MNIW…GGFT) and 357-377 (YLGA…LLFL).

Belongs to the UPF0754 family.

The protein localises to the cell membrane. The sequence is that of UPF0754 membrane protein BT9727_0767 from Bacillus thuringiensis subsp. konkukian (strain 97-27).